A 1493-amino-acid polypeptide reads, in one-letter code: Inactive serine/threonine-protein kinase TEX14 (1493 aa).

ANK repeat units follow at residues 27-54 (LHEY…AVNS), 55-84 (LGQT…DPNH), and 88-117 (DGST…DLRL). One can recognise a Protein kinase domain in the interval 198–511 (VISAQNIYSF…IMKNDLKDFI (314 aa)). Residues 204-212 (IYSFGFGKF) and lysine 266 contribute to the ATP site. Serine 430 is modified (phosphoserine; by PLK1). The segment covering 559–573 (GSQFHSPRGHSSPTG) has biased composition (polar residues). Positions 559–615 (GSQFHSPRGHSSPTGKATPEPPVPDVSPVAQQTHRQDAASPACSVAEEARNPSPDQT) are disordered. 2 positions are modified to phosphoserine: serine 560 and serine 660. Disordered stretches follow at residues 782–904 (HDSP…RISM) and 940–1081 (AATG…LTPD). The GPPX3Y motif lies at 789–795 (GPPASSY). A D-box motif is present at residues 846-854 (KASLERDRN). Polar residues-rich tracts occupy residues 855–904 (QNTS…RISM) and 1001–1020 (CGQT…QRFT). Over residues 1026–1037 (PPREDEQPEHSE) the composition is skewed to basic and acidic residues. Positions 1053 to 1064 (YSGQSAQSTCSP) are enriched in polar residues. A compositionally biased stretch (acidic residues) spans 1066 to 1075 (SSEDTEDMTD). Serine 1100 bears the Phosphoserine mark. The segment at 1115 to 1167 (RPQASGEEKFQMRKNLGKNSEILTKSQFQPIRSPEGEQDETLKEPPKEVKEKD) is disordered. The segment covering 1131 to 1144 (GKNSEILTKSQFQP) has biased composition (polar residues). Residues 1154 to 1167 (ETLKEPPKEVKEKD) show a composition bias toward basic and acidic residues. Serine 1262 carries the post-translational modification Phosphoserine. Disordered regions lie at residues 1288–1307 (GAGS…ATQR) and 1341–1466 (KGQQ…EEEE). Positions 1343–1362 (QQVSSTALDENTASRPGSTE) are enriched in polar residues. Positions 1363–1380 (NDQRHLEEQETHSNKEDS) are enriched in basic and acidic residues. Serine 1400 is subject to Phosphoserine. Residues 1426–1456 (PAREASSKDQEVGEKKRKGEESTKPEKRKPE) are compositionally biased toward basic and acidic residues. Serine 1492 is subject to Phosphoserine.

Belongs to the protein kinase superfamily. Interacts with KIF23 and RBM44. Interacts with CEP55; inhibiting interaction between CEP55 and PDCD6IP/ALIX and TSG101. Phosphorylated on Thr residues by CDK1 during early phases of mitosis, promoting the interaction with PLK1 and recruitment to kinetochores. Phosphorylated on Ser-430 by PLK1 during late prometaphase promotes the rapid depletion from kinetochores and its subsequent degradation by the APC/C complex.

It localises to the cytoplasm. It is found in the midbody. The protein localises to the chromosome. The protein resides in the centromere. Its subcellular location is the kinetochore. Functionally, required both for the formation of intercellular bridges during meiosis and for kinetochore-microtubule attachment during mitosis. Intercellular bridges are evolutionarily conserved structures that connect differentiating germ cells and are required for spermatogenesis and male fertility. Acts by promoting the conversion of midbodies into intercellular bridges via its interaction with CEP55: interaction with CEP55 inhibits the interaction between CEP55 and PDCD6IP/ALIX and TSG101, blocking cell abscission and leading to transform midbodies into intercellular bridges. Also plays a role during mitosis: recruited to kinetochores by PLK1 during early mitosis and regulates the maturation of the outer kinetochores and microtubule attachment. Has no protein kinase activity in vitro. This is Inactive serine/threonine-protein kinase TEX14 (TEX14) from Bos taurus (Bovine).